The sequence spans 347 residues: NADH-ubiquinone oxidoreductase chain 2 (347 aa).

The next 11 membrane-spanning stretches (helical) occupy residues 3 to 23, 25 to 45, 59 to 79, 96 to 116, 122 to 142, 149 to 169, 178 to 198, 200 to 220, 237 to 257, 274 to 294, and 325 to 345; these read PVVL…VMTT, HWLL…PILM, YFLT…INLI, IIMT…FWVP, IQLS…MSIL, INLH…GWGG, IMAY…IYNP, MALL…MTFM, MPLL…LPPL, NSII…FFYM, and LLSP…MLAL.

The protein belongs to the complex I subunit 2 family. In terms of assembly, core subunit of respiratory chain NADH dehydrogenase (Complex I) which is composed of 45 different subunits. Interacts with TMEM242.

It localises to the mitochondrion inner membrane. The enzyme catalyses a ubiquinone + NADH + 5 H(+)(in) = a ubiquinol + NAD(+) + 4 H(+)(out). Its function is as follows. Core subunit of the mitochondrial membrane respiratory chain NADH dehydrogenase (Complex I) which catalyzes electron transfer from NADH through the respiratory chain, using ubiquinone as an electron acceptor. Essential for the catalytic activity and assembly of complex I. This Paranyctimene raptor (Unstriped tube-nosed fruit bat) protein is NADH-ubiquinone oxidoreductase chain 2.